A 97-amino-acid chain; its full sequence is Aspartyl/glutamyl-tRNA(Asn/Gln) amidotransferase subunit C (97 aa).

It belongs to the GatC family. Heterotrimer of A, B and C subunits.

It catalyses the reaction L-glutamyl-tRNA(Gln) + L-glutamine + ATP + H2O = L-glutaminyl-tRNA(Gln) + L-glutamate + ADP + phosphate + H(+). The catalysed reaction is L-aspartyl-tRNA(Asn) + L-glutamine + ATP + H2O = L-asparaginyl-tRNA(Asn) + L-glutamate + ADP + phosphate + 2 H(+). Functionally, allows the formation of correctly charged Asn-tRNA(Asn) or Gln-tRNA(Gln) through the transamidation of misacylated Asp-tRNA(Asn) or Glu-tRNA(Gln) in organisms which lack either or both of asparaginyl-tRNA or glutaminyl-tRNA synthetases. The reaction takes place in the presence of glutamine and ATP through an activated phospho-Asp-tRNA(Asn) or phospho-Glu-tRNA(Gln). The chain is Aspartyl/glutamyl-tRNA(Asn/Gln) amidotransferase subunit C from Prochlorococcus marinus (strain SARG / CCMP1375 / SS120).